The chain runs to 1215 residues: Kinesin-like protein KIN-7I (1215 aa).

The 325-residue stretch at R3–V327 folds into the Kinesin motor domain. Residue G79–T86 coordinates ATP. Coiled-coil stretches lie at residues V333 to L414, E571 to E646, I708 to S855, and D894 to M979.

It belongs to the TRAFAC class myosin-kinesin ATPase superfamily. Kinesin family. KIN-7 subfamily.

This chain is Kinesin-like protein KIN-7I, found in Oryza sativa subsp. japonica (Rice).